Consider the following 513-residue polypeptide: ATP synthase subunit alpha (513 aa).

169–176 (GDRQTGKT) contributes to the ATP binding site.

This sequence belongs to the ATPase alpha/beta chains family. F-type ATPases have 2 components, CF(1) - the catalytic core - and CF(0) - the membrane proton channel. CF(1) has five subunits: alpha(3), beta(3), gamma(1), delta(1), epsilon(1). CF(0) has three main subunits: a(1), b(2) and c(9-12). The alpha and beta chains form an alternating ring which encloses part of the gamma chain. CF(1) is attached to CF(0) by a central stalk formed by the gamma and epsilon chains, while a peripheral stalk is formed by the delta and b chains.

The protein resides in the cell inner membrane. The enzyme catalyses ATP + H2O + 4 H(+)(in) = ADP + phosphate + 5 H(+)(out). In terms of biological role, produces ATP from ADP in the presence of a proton gradient across the membrane. The alpha chain is a regulatory subunit. The polypeptide is ATP synthase subunit alpha (Bordetella avium (strain 197N)).